A 331-amino-acid chain; its full sequence is Inositol 2-dehydrogenase (331 aa).

The protein belongs to the Gfo/Idh/MocA family. In terms of assembly, homotetramer.

It carries out the reaction myo-inositol + NAD(+) = scyllo-inosose + NADH + H(+). Involved in the oxidation of myo-inositol (MI) to 2-keto-myo-inositol (2KMI or 2-inosose). The sequence is that of Inositol 2-dehydrogenase from Renibacterium salmoninarum (strain ATCC 33209 / DSM 20767 / JCM 11484 / NBRC 15589 / NCIMB 2235).